The following is a 202-amino-acid chain: Putative 3-methyladenine DNA glycosylase (202 aa).

This sequence belongs to the DNA glycosylase MPG family.

This Clostridium botulinum (strain Alaska E43 / Type E3) protein is Putative 3-methyladenine DNA glycosylase.